We begin with the raw amino-acid sequence, 489 residues long: Protein nucleotidyltransferase YdiU (489 aa).

The ATP site is built by glycine 88, glycine 90, arginine 91, lysine 111, aspartate 123, glycine 124, arginine 174, and arginine 181. The Proton acceptor role is filled by aspartate 250. The Mg(2+) site is built by asparagine 251 and aspartate 260. Aspartate 260 contacts ATP.

Belongs to the SELO family. The cofactor is Mg(2+). Mn(2+) serves as cofactor.

It carries out the reaction L-seryl-[protein] + ATP = 3-O-(5'-adenylyl)-L-seryl-[protein] + diphosphate. The catalysed reaction is L-threonyl-[protein] + ATP = 3-O-(5'-adenylyl)-L-threonyl-[protein] + diphosphate. The enzyme catalyses L-tyrosyl-[protein] + ATP = O-(5'-adenylyl)-L-tyrosyl-[protein] + diphosphate. It catalyses the reaction L-histidyl-[protein] + UTP = N(tele)-(5'-uridylyl)-L-histidyl-[protein] + diphosphate. It carries out the reaction L-seryl-[protein] + UTP = O-(5'-uridylyl)-L-seryl-[protein] + diphosphate. The catalysed reaction is L-tyrosyl-[protein] + UTP = O-(5'-uridylyl)-L-tyrosyl-[protein] + diphosphate. Its function is as follows. Nucleotidyltransferase involved in the post-translational modification of proteins. It can catalyze the addition of adenosine monophosphate (AMP) or uridine monophosphate (UMP) to a protein, resulting in modifications known as AMPylation and UMPylation. The polypeptide is Protein nucleotidyltransferase YdiU (Vibrio cholerae serotype O1 (strain ATCC 39315 / El Tor Inaba N16961)).